A 148-amino-acid polypeptide reads, in one-letter code: DnaJ homolog subfamily C member 24 (148 aa).

Positions 10 to 81 (DWYSILGADP…ETKKKYDLQR (72 aa)) constitute a J domain. One can recognise a DPH-type MB domain in the interval 92–147 (VDAQVRLEEMSWNQGDESFFLSCRCGGKYTVSKDEAQEATLISCDACSLIVELLHQ). C114, C116, C135, and C138 together coordinate Zn(2+).

This sequence belongs to the DPH4 family. As to quaternary structure, monomer and homooligomer. Iron binding promotes oligomerization. As to expression, detected in heart, brain, spleen, lung, liver, kidney and testis.

Its subcellular location is the cytoplasm. It is found in the cytoskeleton. It functions in the pathway protein modification; peptidyl-diphthamide biosynthesis. Functionally, the iron-bound form is redox-active and can function as electron carrier. Stimulates the ATPase activity of several Hsp70-type chaperones. This ability is enhanced by iron-binding. Plays a role in the diphthamide biosynthesis, a post-translational modification of histidine which occurs in translation elongation factor 2 (EEF2). The sequence is that of DnaJ homolog subfamily C member 24 (Dnajc24) from Mus musculus (Mouse).